A 171-amino-acid chain; its full sequence is Dual specificity protein phosphatase OPG106 (171 aa).

It belongs to the protein-tyrosine phosphatase family. Non-receptor class dual specificity subfamily. As to quaternary structure, homodimer.

Its subcellular location is the virion. The protein localises to the host cytoplasm. It carries out the reaction O-phospho-L-tyrosyl-[protein] + H2O = L-tyrosyl-[protein] + phosphate. It catalyses the reaction O-phospho-L-seryl-[protein] + H2O = L-seryl-[protein] + phosphate. Functionally, serine/tyrosine phosphatase which down-regulates cellular antiviral response by dephosphorylating activated host STAT1 and blocking interferon (IFN)-stimulated innate immune responses. Dephosphorylates the OPG144 protein. The chain is Dual specificity protein phosphatase OPG106 (OPG106) from Monkeypox virus.